We begin with the raw amino-acid sequence, 335 residues long: MNSAFTFLSLAIFPLALFIFWTLSATGPSSPLGRGFPTLTNKRICLLIAHPDDEAMFFAPTLLALTKPELGNHVKILCLSSGMCALLMVLDSASGWFLIYQITGDAAGLGHIRKQELQKSALRLGLRNESDVFIVDDPSRFPDSMTATWSEENVSGLLASAFAPQLAAQASSQSAPMATIDILLTFDQSGVSYHPNHRSLYHGARAFLKALMRGNSGHPCPVTLYTLTSTTLARKYIGVFDAPIAMLSGVISNAFGGSGDRDALSTSPSKKTQELRGIREPPPANRLLFVNSVDDWLSGWKAMVYAHKSQMVWFRWGWITVGRYMVVNDLKKELV.

The helical transmembrane segment at 3–23 (SAFTFLSLAIFPLALFIFWTL) threads the bilayer. N-linked (GlcNAc...) asparagine glycosylation is found at Asn-128 and Asn-153.

The protein belongs to the PIGL family.

Its subcellular location is the endoplasmic reticulum membrane. It catalyses the reaction a 6-(N-acetyl-alpha-D-glucosaminyl)-1-(1,2-diacyl-sn-glycero-3-phospho)-1D-myo-inositol + H2O = a 6-(alpha-D-glucosaminyl)-1-(1,2-diacyl-sn-glycero-3-phospho)-1D-myo-inositol + acetate. It functions in the pathway glycolipid biosynthesis; glycosylphosphatidylinositol-anchor biosynthesis. Functionally, involved in the second step of GPI biosynthesis. De-N-acetylation of N-acetylglucosaminyl-phosphatidylinositol. This chain is N-acetylglucosaminyl-phosphatidylinositol de-N-acetylase, found in Arthroderma benhamiae (strain ATCC MYA-4681 / CBS 112371) (Trichophyton mentagrophytes).